The chain runs to 165 residues: U11/U12 small nuclear ribonucleoprotein 25 kDa protein (165 aa).

Residues 52–137 form the Ubiquitin-like domain; it reads MRLSVVKLDG…IRNNSQVTFM (86 aa). The tract at residues 145–165 is disordered; it reads RGRHSKRKKHRLFRSLHKTSS.

In terms of assembly, component of the U11/U12 snRNPs that are part of the U12-type spliceosome.

The protein resides in the nucleus. The polypeptide is U11/U12 small nuclear ribonucleoprotein 25 kDa protein (SNRNP25) (Arabidopsis thaliana (Mouse-ear cress)).